The chain runs to 285 residues: Hsp90 co-chaperone Cdc37-like 1 (285 aa).

Positions 34–54 (LHNSESMDQEQAMAQAELSEL) are disordered. A coiled-coil region spans residues 35–73 (HNSESMDQEQAMAQAELSELQRSEEEWRRKEAALSQGEN).

The protein belongs to the CDC37 family. In terms of assembly, forms complexes with Hsp70 and Hsp90.

The protein resides in the cytoplasm. In terms of biological role, co-chaperone that binds to numerous proteins and promotes their interaction with Hsp70 and Hsp90. The protein is Hsp90 co-chaperone Cdc37-like 1 (cdc37l1) of Xenopus tropicalis (Western clawed frog).